A 220-amino-acid polypeptide reads, in one-letter code: Ribonuclease P protein component 3 (220 aa).

This sequence belongs to the eukaryotic/archaeal RNase P protein component 3 family. Consists of a catalytic RNA component and at least 4-5 protein subunits.

Its subcellular location is the cytoplasm. The catalysed reaction is Endonucleolytic cleavage of RNA, removing 5'-extranucleotides from tRNA precursor.. Part of ribonuclease P, a protein complex that generates mature tRNA molecules by cleaving their 5'-ends. This chain is Ribonuclease P protein component 3, found in Thermococcus kodakarensis (strain ATCC BAA-918 / JCM 12380 / KOD1) (Pyrococcus kodakaraensis (strain KOD1)).